A 255-amino-acid polypeptide reads, in one-letter code: Syntaxin-6 (255 aa).

Serine 2 carries the N-acetylserine modification. Serine 2 is modified (phosphoserine). The required for interaction with VPS51 stretch occupies residues 2–168 (SMEDPFFVVK…QAQQQLIVEQ (167 aa)). Residues 2–234 (SMEDPFFVVK…VSHMTSDRRQ (233 aa)) are Cytoplasmic-facing. The stretch at 41–74 (EEIDWTTNELRNNLRSIEWDLEDLDETISIVEAN) forms a coiled coil. Serine 129 and serine 152 each carry phosphoserine. The t-SNARE coiled-coil homology domain maps to 163–225 (QLIVEQQDEQ…DNVMKKLAKV (63 aa)). A helical; Anchor for type IV membrane protein membrane pass occupies residues 235-255 (WCAIAILFAVLVVVLILFLVL).

The protein belongs to the syntaxin family. Identified in a complex containing STX6, STX12 and VAMP4. This complex also includes VTI1A. Binds EEA1. Interacts with VPS45A and GOPC. Interacts with MARCHF2; the interaction promotes MARCHF2-mediated ubiquitination and degradation of CFTR. Interacts with MARCHF3. Interacts with BLTP3B (via C-terminal coiled-coil domain). Interacts with BAIAP3; this interaction is increased in the presence of calcium. Interacts with VPS13B.

The protein localises to the golgi apparatus membrane. The protein resides in the golgi apparatus. It localises to the trans-Golgi network membrane. It is found in the recycling endosome membrane. SNARE promoting movement of transport vesicles to target membranes. Targets endosomes to the trans-Golgi network, and may therefore function in retrograde trafficking. Together with SNARE STX12, promotes movement of vesicles from endosomes to the cell membrane, and may therefore function in the endocytic recycling pathway. The sequence is that of Syntaxin-6 (Stx6) from Mus musculus (Mouse).